We begin with the raw amino-acid sequence, 195 residues long: N-(5'-phosphoribosyl)anthranilate isomerase (195 aa).

Belongs to the TrpF family.

It carries out the reaction N-(5-phospho-beta-D-ribosyl)anthranilate = 1-(2-carboxyphenylamino)-1-deoxy-D-ribulose 5-phosphate. Its pathway is amino-acid biosynthesis; L-tryptophan biosynthesis; L-tryptophan from chorismate: step 3/5. This is N-(5'-phosphoribosyl)anthranilate isomerase from Streptococcus gordonii (strain Challis / ATCC 35105 / BCRC 15272 / CH1 / DL1 / V288).